The following is an 846-amino-acid chain: Protein kintoun (846 aa).

4 disordered regions span residues Thr-216–Glu-240, Leu-372–Ala-405, Gln-574–Cys-631, and Lys-762–Asp-846. The span at Leu-372–Val-382 shows a compositional bias: basic and acidic residues. At Ser-380 the chain carries Phosphoserine. Residues Pro-391–Leu-400 are compositionally biased toward acidic residues. Positions Gly-583–His-603 are enriched in basic and acidic residues. Composition is skewed to basic residues over residues Lys-611–Lys-622 and Lys-762–Gln-776. The residue at position 780 (Ser-780) is a Phosphoserine. A compositionally biased stretch (polar residues) spans Leu-795 to Asn-809.

Belongs to the PIH1 family. Kintoun subfamily. As to quaternary structure, interacts with Pp1alpha-96A, Pp1-87B, Pp1-13C and flw.

The protein resides in the cytoplasm. Functionally, required for cytoplasmic pre-assembly of axonemal dyneins, thereby playing a central role in motility in cilia and flagella. Involved in pre-assembly of dynein arm complexes in the cytoplasm before intraflagellar transport loads them for the ciliary compartment. The polypeptide is Protein kintoun (Drosophila yakuba (Fruit fly)).